The sequence spans 342 residues: Polycomb group RING finger protein 2 (342 aa).

The segment at 18–57 adopts an RING-type zinc-finger fold; it reads CALCGGYFIDATTIVECLHSFCKTCIVRYLETNKYCPMCD. Glycyl lysine isopeptide (Lys-Gly) (interchain with G-Cter in SUMO2) cross-links involve residues lysine 51 and lysine 88. A Nuclear localization signal motif is present at residues 81–95; it reads KLVPGLFKDEMKRRR. Threonine 237 is modified (phosphothreonine; by PKA). The tract at residues 237–342 is disordered; sequence TLPTVPTPSE…MTVNGAPCPP (106 aa). The segment covering 243 to 253 has biased composition (polar residues); it reads TPSEGTNTSGA. Over residues 263-318 the composition is skewed to low complexity; that stretch reads APSPATLPATSSSLPSPATPSHGSPSSHGPPATHPTSPTPPSTAAGTTTATNGGTS. The segment covering 319 to 328 has biased composition (polar residues); that stretch reads NCLQTPSSTS. At threonine 334 the chain carries Phosphothreonine; by PKA.

As to quaternary structure, exists as both a monomer and homodimer. Component of a PRC1-like complex. Interacts with CBX8, RING1 and RNF2. Interacts with CBX7. Interacts with PHC2. Phosphorylated. Homodimer formation is regulated by phosphorylation with only unphosphorylated proteins forming homodimers. As to expression, expressed in embryonic stem cells. Expressed in a variety of tumor cells and in neural tissues.

The protein localises to the nucleus. In terms of biological role, transcriptional repressor. Binds specifically to the DNA sequence 5'-GACTNGACT-3'. Has tumor suppressor activity. May play a role in control of cell proliferation and/or neural cell development. Regulates proliferation of early T progenitor cells by maintaining expression of HES1. Also plays a role in antero-posterior specification of the axial skeleton and negative regulation of the self-renewal activity of hematopoietic stem cells. Component of a Polycomb group (PcG) multiprotein PRC1-like complex, a complex class required to maintain the transcriptionally repressive state of many genes, including Hox genes, throughout development. PcG PRC1 complex acts via chromatin remodeling and modification of histones; it mediates monoubiquitination of histone H2A 'Lys-119', rendering chromatin heritably changed in its expressibility. Within the PRC1-like complex, regulates RNF2 ubiquitin ligase activity. This chain is Polycomb group RING finger protein 2 (Pcgf2), found in Mus musculus (Mouse).